The primary structure comprises 386 residues: G2/mitotic-specific cyclin-B2 (386 aa).

Residues Thr45–Pro64 form a disordered region.

It belongs to the cyclin family. Cyclin AB subfamily. As to quaternary structure, interacts with the CDK1 protein kinase to form a serine/threonine kinase holoenzyme complex also known as maturation promoting factor (MPF). The cyclin subunit imparts substrate specificity to the complex.

Essential for the control of the cell cycle at the G2/M (mitosis) transition. The polypeptide is G2/mitotic-specific cyclin-B2 (ccnb2) (Oryzias luzonensis (Luzon ricefish)).